The chain runs to 301 residues: Tail tube protein (301 aa).

It belongs to the skunalikevirus tail tube protein family. In terms of assembly, homohexamer. The tube is composed of 31 hexameric rings.

It localises to the virion. In terms of biological role, forms the cylindrical rigid tail tube. This is Tail tube protein from Lactococcus phage F4-1 (Lactococcus lactis bacteriophage F4-1).